The primary structure comprises 215 residues: Nucleoside triphosphate pyrophosphatase (215 aa).

The active-site Proton acceptor is D80.

Belongs to the Maf family. The cofactor is a divalent metal cation.

The protein localises to the cytoplasm. It carries out the reaction a ribonucleoside 5'-triphosphate + H2O = a ribonucleoside 5'-phosphate + diphosphate + H(+). It catalyses the reaction a 2'-deoxyribonucleoside 5'-triphosphate + H2O = a 2'-deoxyribonucleoside 5'-phosphate + diphosphate + H(+). In terms of biological role, nucleoside triphosphate pyrophosphatase. May have a dual role in cell division arrest and in preventing the incorporation of modified nucleotides into cellular nucleic acids. This Leifsonia xyli subsp. xyli (strain CTCB07) protein is Nucleoside triphosphate pyrophosphatase.